The following is a 509-amino-acid chain: Putative 6-phosphofructo-2-kinase/fructose-2,6-bisphosphatase YLR345W (509 aa).

Ser-6 is modified (phosphoserine). Positions 6-291 (SDDEELLNGL…FFLMNLRQKK (286 aa)) are 6-phosphofructo-2-kinase. 90 to 98 (GLPATSKTL) is a binding site for ATP. Residue Asp-173 is the Proton donor/acceptor of the active site. ATP is bound at residue 212-217 (NIALAL). Arg-237 provides a ligand contact to beta-D-fructose 6-phosphate. The segment at 292–466 (GCVYFARCGT…IAHESTLRVL (175 aa)) is fructose-2,6-bisphosphatase. Residue Arg-298 coordinates beta-D-fructose 2,6-bisphosphate. 415–418 (YKES) is an ATP binding site. Residues Tyr-433 and Arg-464 each contribute to the beta-D-fructose 2,6-bisphosphate site. ATP is bound at residue 460 to 464 (ESTLR).

The protein in the C-terminal section; belongs to the phosphoglycerate mutase family. In terms of assembly, homodimer.

It is found in the cytoplasm. It carries out the reaction beta-D-fructose 2,6-bisphosphate + H2O = beta-D-fructose 6-phosphate + phosphate. The enzyme catalyses beta-D-fructose 6-phosphate + ATP = beta-D-fructose 2,6-bisphosphate + ADP + H(+). Synthesis and degradation of fructose 2,6-bisphosphate. The sequence is that of Putative 6-phosphofructo-2-kinase/fructose-2,6-bisphosphatase YLR345W from Saccharomyces cerevisiae (strain ATCC 204508 / S288c) (Baker's yeast).